The sequence spans 274 residues: MPHRRSAYFVSDRTGITAESLGNALLTQFDMLEFKRETIPFIDTADKAMAVAEQIRQRAQSDHFRPLVFVSIVNPFVREAIQVDDCAMVIDFFHAFVGQLENELEQKATLTVGKSHGIISEEKYDTRIEAVNFSLNHDDGVKLKDLAEADVILVGVSRSGKTPTCLYLALQYGIKAANYPLTPEDLDSPTLPKMLLPYRKKIFGLTIEPQRLHHIRNERKPDSRYASIDNCRREVNEAESLFRHHGVPFISTTHKSIEEIASTILHHTGISRRF.

Position 155–162 (glycine 155–threonine 162) interacts with ADP.

This sequence belongs to the pyruvate, phosphate/water dikinase regulatory protein family. PSRP subfamily.

It carries out the reaction [pyruvate, water dikinase] + ADP = [pyruvate, water dikinase]-phosphate + AMP + H(+). It catalyses the reaction [pyruvate, water dikinase]-phosphate + phosphate + H(+) = [pyruvate, water dikinase] + diphosphate. Its function is as follows. Bifunctional serine/threonine kinase and phosphorylase involved in the regulation of the phosphoenolpyruvate synthase (PEPS) by catalyzing its phosphorylation/dephosphorylation. The protein is Putative phosphoenolpyruvate synthase regulatory protein of Laribacter hongkongensis (strain HLHK9).